Consider the following 37-residue polypeptide: Cytochrome b6-f complex subunit 5 (37 aa).

The chain crosses the membrane as a helical span at residues 5-25; sequence LLSGIVLGLIPITLAGLFVTA.

It belongs to the PetG family. In terms of assembly, the 4 large subunits of the cytochrome b6-f complex are cytochrome b6, subunit IV (17 kDa polypeptide, PetD), cytochrome f and the Rieske protein, while the 4 small subunits are PetG, PetL, PetM and PetN. The complex functions as a dimer.

It is found in the plastid. It localises to the chloroplast thylakoid membrane. Component of the cytochrome b6-f complex, which mediates electron transfer between photosystem II (PSII) and photosystem I (PSI), cyclic electron flow around PSI, and state transitions. PetG is required for either the stability or assembly of the cytochrome b6-f complex. The chain is Cytochrome b6-f complex subunit 5 from Zygnema circumcarinatum (Green alga).